The chain runs to 309 residues: MEKVLVFGHKNPDTDAICSAIAYAELKKELGMNAEPVRLGEISGETQFALDYFKVEGPRFVETVASEVDNVILVDHNERQQSANDIESVRVLEVIDHHRIANFETSDPIYYRCEPVGCTATILNKMYKENGVTIRKEVAGLMLSAIISDSLLFKSPTCTEQDVAAARELAEIAGVDADSYGLEMLKAGADLSGKTMEQLISLDAKEFQMGNAKVEIAQVNAVDTNDVLVHQAELEKVISAVVEEKGLDLFLFVVTDILTNDSVGLAIGKAANVVEKAYNVSLENNTATLKGVVSRKKQIVPVLTEAFQA.

Mn(2+) is bound by residues His9, Asp13, Asp15, Asp75, His97, and Asp149.

Belongs to the PPase class C family. Requires Mn(2+) as cofactor.

The protein resides in the cytoplasm. The catalysed reaction is diphosphate + H2O = 2 phosphate + H(+). The sequence is that of Probable manganese-dependent inorganic pyrophosphatase from Bacillus cereus (strain G9842).